The sequence spans 97 residues: Small ribosomal subunit protein uS17 (97 aa).

The tract at residues 1 to 20 (MSEATVNDNAAVKNEKGARK) is disordered.

Belongs to the universal ribosomal protein uS17 family. Part of the 30S ribosomal subunit.

Functionally, one of the primary rRNA binding proteins, it binds specifically to the 5'-end of 16S ribosomal RNA. This chain is Small ribosomal subunit protein uS17, found in Corynebacterium jeikeium (strain K411).